The primary structure comprises 154 residues: PTS system fructose-specific EIIA component (154 aa).

Positions 8–152 (TITPLELISL…QTVQDVLAEV (145 aa)) constitute a PTS EIIA type-2 domain. The active-site Tele-phosphohistidine intermediate is histidine 70. Histidine 70 is subject to Phosphohistidine; by HPr.

Its subcellular location is the cytoplasm. The phosphoenolpyruvate-dependent sugar phosphotransferase system (sugar PTS), a major carbohydrate active transport system, catalyzes the phosphorylation of incoming sugar substrates concomitantly with their translocation across the cell membrane. The enzyme II PtfABC PTS system is involved in fructose transport. In Haloferax volcanii (strain ATCC 29605 / DSM 3757 / JCM 8879 / NBRC 14742 / NCIMB 2012 / VKM B-1768 / DS2) (Halobacterium volcanii), this protein is PTS system fructose-specific EIIA component.